A 545-amino-acid chain; its full sequence is Sulfite oxidase, mitochondrial (545 aa).

The transit peptide at 1–79 (MLLLHRAVVL…YQDHRCRAAQ (79 aa)) directs the protein to the mitochondrion. One can recognise a Cytochrome b5 heme-binding domain in the interval 82–161 (TRIYTKEEVS…LAQYKVGELN (80 aa)). Histidine 118 is a binding site for heme b. The residue at position 123 (serine 123) is a Phosphoserine. Histidine 143, glutamine 145, and histidine 147 together coordinate heme b. Positions 165-174 (KVAPTVETSD) are hinge. The interval 175 to 401 (PYADDPVRHP…YSHWQRRDYK (227 aa)) is moco domain. Mo-molybdopterin contacts are provided by residues 215–219 (FTRNH), cysteine 264, aspartate 322, histidine 361, arginine 366, and 377–379 (HVK). The interval 402-538 (GFSPSVDWDT…RGVLSNAWHR (137 aa)) is homodimerization.

Homodimer. Requires heme b as cofactor. The cofactor is Mo-molybdopterin.

It is found in the mitochondrion intermembrane space. The catalysed reaction is sulfite + O2 + H2O = sulfate + H2O2. The protein operates within energy metabolism; sulfur metabolism. Functionally, catalyzes the oxidation of sulfite to sulfate, the terminal reaction in the oxidative degradation of sulfur-containing amino acids. In Macaca fascicularis (Crab-eating macaque), this protein is Sulfite oxidase, mitochondrial (SUOX).